Reading from the N-terminus, the 1158-residue chain is MESGHLLWALLFMQSLWPQLTDGATRVYYLGIRDVQWNYAPKGRNVITNQPLDSDIVASSFLKSDKNRIGGTYKKTIYKEYKDDSYTDEVAQPAWLGFLGPVLQAEVGDVILIHLKNFATRPYTIHPHGVFYEKDSEGSLYPDGSSGPLKADDSVPPGGSHIYNWTIPEGHAPTDADPACLTWIYHSHVDAPRDIATGLIGPLITCKRGALDGNSPPQRQDVDHDFFLLFSVVDENLSWHLNENIATYCSDPASVDKEDETFQESNRMHAINGFVFGNLPELNMCAQKRVAWHLFGMGNEIDVHTAFFHGQMLTTRGHHTDVANIFPATFVTAEMVPWEPGTWLISCQVNSHFRDGMQALYKVKSCSMAPPVDLLTGKVRQYFIEAHEIQWDYGPMGHDGSTGKNLREPGSISDKFFQKSSSRIGGTYWKVRYEAFQDETFQEKMHLEEDRHLGILGPVIRAEVGDTIQVVFYNRASQPFSMQPHGVFYEKDYEGTVYNDGSSYPGLVAKPFEKVTYRWTVPPHAGPTAQDPACLTWMYFSAADPIRDTNSGLVGPLLVCRAGALGADGKQKGVDKEFFLLFTVLDENKSWYSNANQAAAMLDFRLLSEDIEGFQDSNRMHAINGFLFSNLPRLDMCKGDTVAWHLLGLGTETDVHGVMFQGNTVQLQGMRKGAAMLFPHTFVMAIMQPDNLGTFEIYCQAGSHREAGMRAIYNVSQCPGHQATPRQRYQAARIYYIMAEEVEWDYCPDRSWEREWHNQSEKDSYGYIFLSNKDGLLGSRYKKAVFREYTDGTFRIPRPRTGPEEHLGILGPLIKGEVGDILTVVFKNNASRPYSVHAHGVLESTTVWPLAAEPGEVVTYQWNIPERSGPGPNDSACVSWIYYSAVDPIKDMYSGLVGPLAICQKGILEPHGGRSDMDREFALLFLIFDENKSWYLEENVATHGSQDPGSINLQDETFLESNKMHAINGKLYANLRGLTMYQGERVAWYMLAMGQDVDLHTIHFHAESFLYRNGENYRADVVDLFPGTFEVVEMVASNPGTWLMHCHVTDHVHAGMETLFTVFSRTEHLSPLTVITKETEKAVPPRDIEEGNVKMLGMQIPIKNVEMLASVLVAISVTLLLVVLALGGVVWYQHRQRKLRRNRRSILDDSFKLLSFKQ.

The N-terminal stretch at 1–23 (MESGHLLWALLFMQSLWPQLTDG) is a signal peptide. Plastocyanin-like domains follow at residues 24–206 (ATRV…LITC), 218–366 (QRQD…VKSC), 370–560 (PPVD…LLVC), 570–718 (KQKG…VSQC), 731–903 (AARI…LAIC), and 911–1067 (HGGR…SRTE). The Extracellular portion of the chain corresponds to 24–1110 (ATRVYYLGIR…PIKNVEMLAS (1087 aa)). Na(+) is bound by residues glycine 70 and tyrosine 73. Cu(2+)-binding residues include histidine 126 and histidine 128. O2 is bound at residue histidine 126. Residues lysine 134, aspartate 152, and aspartate 153 each contribute to the Ca(2+) site. A glycan (N-linked (GlcNAc...) asparagine) is linked at asparagine 164. Cysteine 180 and cysteine 206 form a disulfide bridge. Residues histidine 186 and histidine 188 each coordinate Cu(2+). Histidine 186 is a binding site for O2. Asparagine 236 is a glycosylation site (N-linked (GlcNAc...) asparagine). Serine 265 provides a ligand contact to Na(+). Cysteines 285 and 366 form a disulfide. Histidine 304, cysteine 347, and histidine 352 together coordinate Cu(2+). The Na(+) site is built by phenylalanine 416, glycine 425, and tyrosine 428. Cysteine 534 and cysteine 560 are joined by a disulfide. N-linked (GlcNAc...) asparagine glycosylation is present at asparagine 588. Serine 617 contacts Na(+). A disulfide bond links cysteine 637 and cysteine 718. Histidine 656, cysteine 699, histidine 704, and methionine 709 together coordinate Cu(2+). N-linked (GlcNAc...) asparagine glycosylation is found at asparagine 714 and asparagine 758. Positions 769 and 778 each coordinate Na(+). 2 N-linked (GlcNAc...) asparagine glycosylation sites follow: asparagine 829 and asparagine 873. A disulfide bridge links cysteine 877 with cysteine 903. Asparagine 931 carries an N-linked (GlcNAc...) asparagine glycan. Positions 1000, 1003, 1005, 1045, 1046, 1047, 1051, and 1056 each coordinate Cu(2+). O2 contacts are provided by histidine 1003 and histidine 1005. Histidine 1047 serves as a coordination point for O2. The helical transmembrane segment at 1111-1131 (VLVAISVTLLLVVLALGGVVW) threads the bilayer. Topologically, residues 1132-1158 (YQHRQRKLRRNRRSILDDSFKLLSFKQ) are cytoplasmic. Serine 1145, serine 1150, and serine 1155 each carry phosphoserine.

The protein belongs to the multicopper oxidase family. In terms of assembly, part of a complex composed of SLC40A1/ferroportin, TF/transferrin and HEPH/hephaestin that transfers iron from cells to transferrin. Cu cation is required as a cofactor. In terms of tissue distribution, expressed by intestinal absorptive cells (at protein level). Also detected in breast, colon, bone trabecular cells and fibroblasts.

Its subcellular location is the basolateral cell membrane. It catalyses the reaction 4 Fe(2+) + O2 + 4 H(+) = 4 Fe(3+) + 2 H2O. Plasma membrane ferroxidase that mediates the extracellular conversion of ferrous/Fe(2+) iron into its ferric/Fe(3+) form. Couples ferroportin which specifically exports ferrous/Fe(2+) iron from cells to transferrin that only binds and shuttles extracellular ferric/Fe(3+) iron throughout the body. By helping iron transfer from cells to blood mainly contributes to dietary iron absorption by the intestinal epithelium and more generally regulates iron levels in the body. This Homo sapiens (Human) protein is Hephaestin.